Reading from the N-terminus, the 215-residue chain is Cytochrome b6 (215 aa).

A helical membrane pass occupies residues 32-52 (IFYCLGGITLTCFIIQVATGF). Cysteine 35 contacts heme c. Histidine 86 and histidine 100 together coordinate heme b. The next 3 helical transmembrane spans lie at 90–110 (ASMM…TGGF), 116–136 (LTWV…VTGY), and 186–206 (LHTF…FLMI). Histidine 187 and histidine 202 together coordinate heme b.

Belongs to the cytochrome b family. PetB subfamily. The 4 large subunits of the cytochrome b6-f complex are cytochrome b6, subunit IV (17 kDa polypeptide, PetD), cytochrome f and the Rieske protein, while the 4 small subunits are PetG, PetL, PetM and PetN. The complex functions as a dimer. Requires heme b as cofactor. Heme c serves as cofactor.

The protein localises to the plastid. It is found in the chloroplast thylakoid membrane. Component of the cytochrome b6-f complex, which mediates electron transfer between photosystem II (PSII) and photosystem I (PSI), cyclic electron flow around PSI, and state transitions. The sequence is that of Cytochrome b6 from Zygnema circumcarinatum (Green alga).